Here is a 203-residue protein sequence, read N- to C-terminus: Small ribosomal subunit protein uS4 (203 aa).

The S4 RNA-binding domain maps to 93-154 (RRLDNVVFRA…KSRNMDAVTD (62 aa)).

Belongs to the universal ribosomal protein uS4 family. In terms of assembly, part of the 30S ribosomal subunit. Contacts protein S5. The interaction surface between S4 and S5 is involved in control of translational fidelity.

One of the primary rRNA binding proteins, it binds directly to 16S rRNA where it nucleates assembly of the body of the 30S subunit. In terms of biological role, with S5 and S12 plays an important role in translational accuracy. This is Small ribosomal subunit protein uS4 from Chlorobium luteolum (strain DSM 273 / BCRC 81028 / 2530) (Pelodictyon luteolum).